The sequence spans 427 residues: UPF0229 protein YeaH (427 aa).

Residues 79 to 90 (NDHFIQNDRIER) are compositionally biased toward basic and acidic residues. The tract at residues 79–110 (NDHFIQNDRIERPQGGGGGSGSGQGQASQDGE) is disordered. Over residues 92 to 102 (QGGGGGSGSGQ) the composition is skewed to gly residues.

It belongs to the UPF0229 family.

In Salmonella paratyphi B (strain ATCC BAA-1250 / SPB7), this protein is UPF0229 protein YeaH.